The chain runs to 473 residues: tRNA-2-methylthio-N(6)-dimethylallyladenosine synthase (473 aa).

The MTTase N-terminal domain occupies 5–125; sequence RKLHIKSYGC…LPQLLARAKA (121 aa). Residues Cys14, Cys50, Cys88, Cys166, Cys170, and Cys173 each coordinate [4Fe-4S] cluster. The region spanning 152 to 384 is the Radical SAM core domain; sequence RARGISAFVT…QNLIDSQQSA (233 aa). Residues 387–449 enclose the TRAM domain; sequence RAAVGTTVDV…RYSLLGSLAS (63 aa). Over residues 453–462 the composition is skewed to low complexity; the sequence is SRASADDAPP. Residues 453-473 are disordered; that stretch reads SRASADDAPPVGASSPAIMGV.

The protein belongs to the methylthiotransferase family. MiaB subfamily. In terms of assembly, monomer. [4Fe-4S] cluster is required as a cofactor.

The protein resides in the cytoplasm. The enzyme catalyses N(6)-dimethylallyladenosine(37) in tRNA + (sulfur carrier)-SH + AH2 + 2 S-adenosyl-L-methionine = 2-methylsulfanyl-N(6)-dimethylallyladenosine(37) in tRNA + (sulfur carrier)-H + 5'-deoxyadenosine + L-methionine + A + S-adenosyl-L-homocysteine + 2 H(+). Catalyzes the methylthiolation of N6-(dimethylallyl)adenosine (i(6)A), leading to the formation of 2-methylthio-N6-(dimethylallyl)adenosine (ms(2)i(6)A) at position 37 in tRNAs that read codons beginning with uridine. The polypeptide is tRNA-2-methylthio-N(6)-dimethylallyladenosine synthase (Nitrobacter hamburgensis (strain DSM 10229 / NCIMB 13809 / X14)).